The sequence spans 1755 residues: Transposon Ty1-DR6 Gag-Pol polyprotein (1755 aa).

Composition is skewed to polar residues over residues 1–23 (MESQQLSQHSPISHGSACASVTS), 48–60 (TKANSQQTTTPAS), and 127–152 (QSQFPQYPSSVGTPLSTPSPESGNTF). 3 disordered regions span residues 1–93 (MESQ…MMTQ), 126–174 (PQSQ…PPPM), and 352–421 (GSRN…SKST). A compositionally biased stretch (low complexity) spans 153–165 (TDSSSADSDMTST). Positions 299-401 (NNGIHINNKV…NSKSKTARAH (103 aa)) are RNA-binding. Positions 402 to 418 (NVSTSNNSPSTDNDSIS) are enriched in low complexity. Ser-416 carries the phosphoserine modification. Asp-461 acts as the For protease activity; shared with dimeric partner in catalysis. Residues 583-640 (NVHTSESTRKYPYPFIHRMLAHANAQTIRYSLKNNTITYFNESDVDWSSAIDYQCPDC) are integrase-type zinc finger-like. The Integrase catalytic domain maps to 660 to 835 (NSYEPFQYLH…AGLDISTLLP (176 aa)). Residues Asp-671 and Asp-736 each coordinate Mg(2+). 3 disordered regions span residues 956–1087 (SKAV…ETEK), 1092–1111 (RSPSIDASPPENNSSHNIVP), and 1130–1187 (DLPL…DNET). The span at 960–969 (SPTDSTPPST) shows a compositional bias: low complexity. A compositionally biased stretch (polar residues) spans 1005-1015 (STPQISNIEST). The segment covering 1038–1053 (ESSHASKSKDFRHSDS) has biased composition (basic and acidic residues). 2 stretches are compositionally biased toward polar residues: residues 1054-1082 (YSENETNHTNVPISSTGGTNNKTVPQISD) and 1101-1111 (PENNSSHNIVP). Residues 1178–1212 (KKRSLEDNETEIKVSRDTWNTKNMRSLEPPRSKKR) carry the Bipartite nuclear localization signal motif. The 139-residue stretch at 1338–1476 (NNYYITQLDI…DILGLEIKYQ (139 aa)) folds into the Reverse transcriptase Ty1/copia-type domain. Mg(2+) is bound by residues Asp-1346, Asp-1427, Asp-1428, Asp-1610, Glu-1652, and Asp-1685. In terms of domain architecture, RNase H Ty1/copia-type spans 1610–1752 (DASYGNQPYY…IKTFKLLTNK (143 aa)).

In terms of assembly, the capsid protein forms a homotrimer, from which the VLPs are assembled. The protease is a homodimer, whose active site consists of two apposed aspartic acid residues. In terms of processing, initially, virus-like particles (VLPs) are composed of the structural unprocessed proteins Gag and Gag-Pol, and also contain the host initiator methionine tRNA (tRNA(i)-Met) which serves as a primer for minus-strand DNA synthesis, and a dimer of genomic Ty RNA. Processing of the polyproteins occurs within the particle and proceeds by an ordered pathway, called maturation. First, the protease (PR) is released by autocatalytic cleavage of the Gag-Pol polyprotein yielding capsid protein p45 and a Pol-p154 precursor protein. This cleavage is a prerequisite for subsequent processing of Pol-p154 at the remaining sites to release the mature structural and catalytic proteins. Maturation takes place prior to the RT reaction and is required to produce transposition-competent VLPs.

The protein resides in the cytoplasm. It is found in the nucleus. It carries out the reaction DNA(n) + a 2'-deoxyribonucleoside 5'-triphosphate = DNA(n+1) + diphosphate. The catalysed reaction is Endonucleolytic cleavage to 5'-phosphomonoester.. In terms of biological role, capsid protein (CA) is the structural component of the virus-like particle (VLP), forming the shell that encapsulates the retrotransposons dimeric RNA genome. The particles are assembled from trimer-clustered units and there are holes in the capsid shells that allow for the diffusion of macromolecules. CA also has nucleocapsid-like chaperone activity, promoting primer tRNA(i)-Met annealing to the multipartite primer-binding site (PBS), dimerization of Ty1 RNA and initiation of reverse transcription. Its function is as follows. The aspartyl protease (PR) mediates the proteolytic cleavages of the Gag and Gag-Pol polyproteins after assembly of the VLP. Functionally, reverse transcriptase/ribonuclease H (RT) is a multifunctional enzyme that catalyzes the conversion of the retro-elements RNA genome into dsDNA within the VLP. The enzyme displays a DNA polymerase activity that can copy either DNA or RNA templates, and a ribonuclease H (RNase H) activity that cleaves the RNA strand of RNA-DNA heteroduplexes during plus-strand synthesis and hydrolyzes RNA primers. The conversion leads to a linear dsDNA copy of the retrotransposon that includes long terminal repeats (LTRs) at both ends. Integrase (IN) targets the VLP to the nucleus, where a subparticle preintegration complex (PIC) containing at least integrase and the newly synthesized dsDNA copy of the retrotransposon must transit the nuclear membrane. Once in the nucleus, integrase performs the integration of the dsDNA into the host genome. The sequence is that of Transposon Ty1-DR6 Gag-Pol polyprotein (TY1B-DR6) from Saccharomyces cerevisiae (strain ATCC 204508 / S288c) (Baker's yeast).